Reading from the N-terminus, the 75-residue chain is MPITSKYTDEQVETILTEIGAVLDKHGATPELSLMIAGNIATNVLNQQVAASQRKLIAEKFAQALISSLQEPKTH.

It belongs to the UPF0352 family.

The protein is UPF0352 protein VV1_3121 of Vibrio vulnificus (strain CMCP6).